Consider the following 89-residue polypeptide: Small ribosomal subunit protein uS15c (89 aa).

Belongs to the universal ribosomal protein uS15 family. In terms of assembly, part of the 30S ribosomal subunit.

The protein localises to the plastid. Its subcellular location is the chloroplast. This Chloranthus spicatus (Chulantree) protein is Small ribosomal subunit protein uS15c (rps15).